The chain runs to 156 residues: Small ribosomal subunit protein uS7 (156 aa).

Belongs to the universal ribosomal protein uS7 family. As to quaternary structure, part of the 30S ribosomal subunit. Contacts proteins S9 and S11.

In terms of biological role, one of the primary rRNA binding proteins, it binds directly to 16S rRNA where it nucleates assembly of the head domain of the 30S subunit. Is located at the subunit interface close to the decoding center, probably blocks exit of the E-site tRNA. In Shigella dysenteriae serotype 1 (strain Sd197), this protein is Small ribosomal subunit protein uS7.